A 393-amino-acid chain; its full sequence is tRNA(Met) cytidine acetate ligase (393 aa).

ATP is bound by residues G81, N142, and R167.

It belongs to the TmcAL family.

Its subcellular location is the cytoplasm. It catalyses the reaction cytidine(34) in elongator tRNA(Met) + acetate + ATP = N(4)-acetylcytidine(34) in elongator tRNA(Met) + AMP + diphosphate. Its function is as follows. Catalyzes the formation of N(4)-acetylcytidine (ac(4)C) at the wobble position of elongator tRNA(Met), using acetate and ATP as substrates. First activates an acetate ion to form acetyladenylate (Ac-AMP) and then transfers the acetyl group to tRNA to form ac(4)C34. This is tRNA(Met) cytidine acetate ligase from Bacillus mycoides (strain KBAB4) (Bacillus weihenstephanensis).